Consider the following 59-residue polypeptide: Large ribosomal subunit protein bL32 (59 aa).

The tract at residues 1–25 is disordered; that stretch reads MAVQQNKKSPSKRGMHRAHDFLTAP.

The protein belongs to the bacterial ribosomal protein bL32 family.

The chain is Large ribosomal subunit protein bL32 from Azoarcus sp. (strain BH72).